Reading from the N-terminus, the 129-residue chain is Small ribosomal subunit protein uS11 (129 aa).

Belongs to the universal ribosomal protein uS11 family. As to quaternary structure, part of the 30S ribosomal subunit. Interacts with proteins S7 and S18. Binds to IF-3.

Its function is as follows. Located on the platform of the 30S subunit, it bridges several disparate RNA helices of the 16S rRNA. Forms part of the Shine-Dalgarno cleft in the 70S ribosome. The polypeptide is Small ribosomal subunit protein uS11 (Nitrosomonas eutropha (strain DSM 101675 / C91 / Nm57)).